Consider the following 616-residue polypeptide: Chaperone protein HscA (616 aa).

This sequence belongs to the heat shock protein 70 family.

Its function is as follows. Chaperone involved in the maturation of iron-sulfur cluster-containing proteins. Has a low intrinsic ATPase activity which is markedly stimulated by HscB. Involved in the maturation of IscU. The protein is Chaperone protein HscA of Klebsiella pneumoniae subsp. pneumoniae (strain ATCC 700721 / MGH 78578).